Consider the following 242-residue polypeptide: Trypsin-1 (242 aa).

An N-terminal signal peptide occupies residues 1–15; it reads MISLVFVLLIGAAFA. Positions 16 to 20 are cleaved as a propeptide — activation peptide; sequence TEDDK. Residues 21 to 240 enclose the Peptidase S1 domain; that stretch reads IVGGYECKAY…FNDWLTSTMA (220 aa). Cystine bridges form between cysteine 27/cysteine 156, cysteine 45/cysteine 61, cysteine 129/cysteine 229, cysteine 136/cysteine 202, cysteine 167/cysteine 181, and cysteine 192/cysteine 216. Histidine 60 functions as the Charge relay system in the catalytic mechanism. Glutamate 72, asparagine 74, valine 77, and glutamate 82 together coordinate Ca(2+). Residue aspartate 104 is the Charge relay system of the active site. Serine 196 acts as the Charge relay system in catalysis.

It belongs to the peptidase S1 family. It depends on Ca(2+) as a cofactor.

It is found in the secreted. The protein resides in the extracellular space. It catalyses the reaction Preferential cleavage: Arg-|-Xaa, Lys-|-Xaa.. This chain is Trypsin-1, found in Salmo salar (Atlantic salmon).